A 113-amino-acid chain; its full sequence is Hydrogenase maturation factor HypA (113 aa).

His2 provides a ligand contact to Ni(2+). The Zn(2+) site is built by Cys73, Cys76, Cys89, and Cys92.

Belongs to the HypA/HybF family.

In terms of biological role, involved in the maturation of [NiFe] hydrogenases. Required for nickel insertion into the metal center of the hydrogenase. The polypeptide is Hydrogenase maturation factor HypA (Methylocella silvestris (strain DSM 15510 / CIP 108128 / LMG 27833 / NCIMB 13906 / BL2)).